We begin with the raw amino-acid sequence, 100 residues long: MSSPSAPLATPDVELDVHTLSSENLPWLCIVWDDPVNLMSYVTYVFQTVLGFSKKRATELMMQVHTEGKAVVSSGEKDKVEGDVKKLHTAGLWATMQQAG.

Belongs to the ClpS family. In terms of assembly, binds to the N-terminal domain of the chaperone ClpA.

Involved in the modulation of the specificity of the ClpAP-mediated ATP-dependent protein degradation. In Corynebacterium glutamicum (strain R), this protein is ATP-dependent Clp protease adapter protein ClpS.